Reading from the N-terminus, the 110-residue chain is Large ribosomal subunit protein uL22 (110 aa).

This sequence belongs to the universal ribosomal protein uL22 family. As to quaternary structure, part of the 50S ribosomal subunit.

Its function is as follows. This protein binds specifically to 23S rRNA; its binding is stimulated by other ribosomal proteins, e.g. L4, L17, and L20. It is important during the early stages of 50S assembly. It makes multiple contacts with different domains of the 23S rRNA in the assembled 50S subunit and ribosome. Functionally, the globular domain of the protein is located near the polypeptide exit tunnel on the outside of the subunit, while an extended beta-hairpin is found that lines the wall of the exit tunnel in the center of the 70S ribosome. This is Large ribosomal subunit protein uL22 from Aliivibrio fischeri (strain MJ11) (Vibrio fischeri).